A 296-amino-acid polypeptide reads, in one-letter code: Sulfotransferase 1B1 (296 aa).

Residue 48–53 (KSGTTW) coordinates 3'-phosphoadenylyl sulfate. Residue 107-109 (KTH) coordinates substrate. The active-site Proton acceptor is the histidine 109. 3'-phosphoadenylyl sulfate is bound by residues arginine 131, serine 139, tyrosine 194, 228-233 (TSFEMM), and 258-260 (RKG).

This sequence belongs to the sulfotransferase 1 family. In terms of tissue distribution, expressed highly in the colon, kidney and small intestine of male and female dogs. Highly expressed in the jejunum and ileum of the male dog than the female dog, which displayed more expression in duodenum (at protein level).

It localises to the cytoplasm. The catalysed reaction is a phenol + 3'-phosphoadenylyl sulfate = an aryl sulfate + adenosine 3',5'-bisphosphate + H(+). It carries out the reaction 3,3',5-triiodo-L-thyronine + 3'-phosphoadenylyl sulfate = 3,3',5-triiodo-L-thyronine sulfate + adenosine 3',5'-bisphosphate + H(+). The enzyme catalyses 3,3',5'-triiodo-L-thyronine + 3'-phosphoadenylyl sulfate = 3,3',5'-triiodo-L-thyronine sulfate + adenosine 3',5'-bisphosphate + H(+). It catalyses the reaction 3,3'-diiodo-L-thyronine + 3'-phosphoadenylyl sulfate = 3,3'-diiodo-L-thyronine sulfate + adenosine 3',5'-bisphosphate + H(+). The catalysed reaction is 4-ethylphenol + 3'-phosphoadenylyl sulfate = 4-ethylphenyl sulfate + adenosine 3',5'-bisphosphate + H(+). Functionally, sulfotransferase that utilizes 3'-phospho-5'-adenylyl sulfate (PAPS) as sulfonate donor to catalyze the sulfate conjugation of dopamine, small phenols such as 1-naphthol and p-nitrophenol and thyroid hormones, including 3,3'-diiodothyronine, triidothyronine (T3) and reverse triiodothyronine (rT3). May play a role in gut microbiota-host metabolic interaction. O-sulfonates 4-ethylphenol (4-EP), a dietary tyrosine-derived metabolite produced by gut bacteria. The product 4-EPS crosses the blood-brain barrier and may negatively regulate oligodendrocyte maturation and myelination, affecting the functional connectivity of different brain regions associated with the limbic system. This chain is Sulfotransferase 1B1 (SULT1B1), found in Canis lupus familiaris (Dog).